We begin with the raw amino-acid sequence, 132 residues long: Small ribosomal subunit protein uS11 (132 aa).

The protein belongs to the universal ribosomal protein uS11 family. In terms of assembly, part of the 30S ribosomal subunit. Interacts with proteins S7 and S18. Binds to IF-3.

Functionally, located on the platform of the 30S subunit, it bridges several disparate RNA helices of the 16S rRNA. Forms part of the Shine-Dalgarno cleft in the 70S ribosome. This is Small ribosomal subunit protein uS11 from Chlamydia caviae (strain ATCC VR-813 / DSM 19441 / 03DC25 / GPIC) (Chlamydophila caviae).